The primary structure comprises 223 residues: DNA mismatch repair protein MutH (223 aa).

Belongs to the MutH family.

It is found in the cytoplasm. In terms of biological role, sequence-specific endonuclease that cleaves unmethylated GATC sequences. It is involved in DNA mismatch repair. This is DNA mismatch repair protein MutH from Haemophilus influenzae (strain PittEE).